Consider the following 302-residue polypeptide: Bifunctional protein FolD (302 aa).

NADP(+) is bound by residues 165–167 (GRS), Ser190, and Ile231.

The protein belongs to the tetrahydrofolate dehydrogenase/cyclohydrolase family. Homodimer.

The catalysed reaction is (6R)-5,10-methylene-5,6,7,8-tetrahydrofolate + NADP(+) = (6R)-5,10-methenyltetrahydrofolate + NADPH. It carries out the reaction (6R)-5,10-methenyltetrahydrofolate + H2O = (6R)-10-formyltetrahydrofolate + H(+). It functions in the pathway one-carbon metabolism; tetrahydrofolate interconversion. Catalyzes the oxidation of 5,10-methylenetetrahydrofolate to 5,10-methenyltetrahydrofolate and then the hydrolysis of 5,10-methenyltetrahydrofolate to 10-formyltetrahydrofolate. This is Bifunctional protein FolD from Prochlorococcus marinus (strain MIT 9211).